Reading from the N-terminus, the 149-residue chain is SsrA-binding protein (149 aa).

It belongs to the SmpB family.

It is found in the cytoplasm. Required for rescue of stalled ribosomes mediated by trans-translation. Binds to transfer-messenger RNA (tmRNA), required for stable association of tmRNA with ribosomes. tmRNA and SmpB together mimic tRNA shape, replacing the anticodon stem-loop with SmpB. tmRNA is encoded by the ssrA gene; the 2 termini fold to resemble tRNA(Ala) and it encodes a 'tag peptide', a short internal open reading frame. During trans-translation Ala-aminoacylated tmRNA acts like a tRNA, entering the A-site of stalled ribosomes, displacing the stalled mRNA. The ribosome then switches to translate the ORF on the tmRNA; the nascent peptide is terminated with the 'tag peptide' encoded by the tmRNA and targeted for degradation. The ribosome is freed to recommence translation, which seems to be the essential function of trans-translation. The polypeptide is SsrA-binding protein (Anaplasma marginale (strain St. Maries)).